A 204-amino-acid polypeptide reads, in one-letter code: Nascent polypeptide-associated complex subunit alpha (204 aa).

Positions 1–19 (MADPRVEELPDEEVPKANV) are enriched in basic and acidic residues. Disordered regions lie at residues 1-47 (MADP…IHSR) and 118-167 (QLAA…GLEA). The span at 22-32 (AGSDSESEAGE) shows a compositional bias: acidic residues. Residues 46 to 111 (SRNEKKARKA…AKIEDLNSQA (66 aa)) form the NAC-A/B domain. Positions 118–128 (QLAAAEAAAGE) are enriched in low complexity. A compositionally biased stretch (basic and acidic residues) spans 129–151 (HAGHDHDHDHGKGKAPETEAKKE). Over residues 152 to 164 (EEEDDGEEVDETG) the composition is skewed to acidic residues. Residues 165–204 (LEAKDIELVMAQANVSRKKAVKALRENDNDIVNSIMALSI) form the UBA domain.

This sequence belongs to the NAC-alpha family. In terms of assembly, part of the nascent polypeptide-associated complex (NAC), consisting of egd2 and egd1. NAC associates with ribosomes via egd1.

It localises to the cytoplasm. Its subcellular location is the nucleus. Its function is as follows. Component of the nascent polypeptide-associated complex (NAC), a dynamic component of the ribosomal exit tunnel, protecting the emerging polypeptides from interaction with other cytoplasmic proteins to ensure appropriate nascent protein targeting. The NAC complex also promotes mitochondrial protein import by enhancing productive ribosome interactions with the outer mitochondrial membrane and blocks the inappropriate interaction of ribosomes translating non-secretory nascent polypeptides with translocation sites in the membrane of the endoplasmic reticulum. Egd2 may also be involved in transcription regulation. The chain is Nascent polypeptide-associated complex subunit alpha (egd2) from Aspergillus fumigatus (strain ATCC MYA-4609 / CBS 101355 / FGSC A1100 / Af293) (Neosartorya fumigata).